We begin with the raw amino-acid sequence, 311 residues long: Ribonuclease HIII (311 aa).

Positions 95 to 311 (MSIVGSDEVG…NTEKAFRLLK (217 aa)) constitute an RNase H type-2 domain. Residues aspartate 101, glutamate 102, and aspartate 206 each coordinate a divalent metal cation.

It belongs to the RNase HII family. RnhC subfamily. It depends on Mn(2+) as a cofactor. Mg(2+) is required as a cofactor.

It is found in the cytoplasm. It carries out the reaction Endonucleolytic cleavage to 5'-phosphomonoester.. Functionally, endonuclease that specifically degrades the RNA of RNA-DNA hybrids. The protein is Ribonuclease HIII of Bacillus thuringiensis subsp. konkukian (strain 97-27).